A 342-amino-acid chain; its full sequence is MKIAIDAMGGDYAPMEIVKGVEIARDRYPDIEFLLFGTSEQVKPLVKDWSHITLIPTTEVIEMGDEPVKAMRRKKDSSMVRAANAVKAGEADALFSAGNTGALLSSAIFLIGRIKGVDRPALATALPSFAGENDQFVFMDLGANAESKASHLYQYGILGSFYASHVLGINDARVRLLNNGAEEDKGDEVHKIAHQLMKNSQSFNFLGNVEARELLEGTADVVVADGFSGNAALKATEGTALMMLKQIKQAIMQTGLRGKMGGLLLKPAFKDIQKKLDYNEAGGAVILGVNAPVVKTHGSAKANAVANTMGQIKKMIEKNLVPDIRTYIADHKDELQAAKNEL.

It belongs to the PlsX family. As to quaternary structure, homodimer. Probably interacts with PlsY.

The protein resides in the cytoplasm. The enzyme catalyses a fatty acyl-[ACP] + phosphate = an acyl phosphate + holo-[ACP]. It participates in lipid metabolism; phospholipid metabolism. Catalyzes the reversible formation of acyl-phosphate (acyl-PO(4)) from acyl-[acyl-carrier-protein] (acyl-ACP). This enzyme utilizes acyl-ACP as fatty acyl donor, but not acyl-CoA. The chain is Phosphate acyltransferase from Leuconostoc mesenteroides subsp. mesenteroides (strain ATCC 8293 / DSM 20343 / BCRC 11652 / CCM 1803 / JCM 6124 / NCDO 523 / NBRC 100496 / NCIMB 8023 / NCTC 12954 / NRRL B-1118 / 37Y).